We begin with the raw amino-acid sequence, 105 residues long: Flexible cuticle protein 12 (105 aa).

Positions 1–16 are cleaved as a signal peptide; that stretch reads MKSFVVVALLVAVAAA. A Chitin-binding type R&amp;R domain is found at 37–105; it reads VEGFQYGYET…KPVGAHIPVA (69 aa).

In Hyalophora cecropia (Cecropia moth), this protein is Flexible cuticle protein 12 (CP12).